The following is a 92-amino-acid chain: Small ribosomal subunit protein uS19c (92 aa).

Belongs to the universal ribosomal protein uS19 family.

It is found in the plastid. In terms of biological role, protein S19 forms a complex with S13 that binds strongly to the 16S ribosomal RNA. In Cuscuta reflexa (Southern Asian dodder), this protein is Small ribosomal subunit protein uS19c.